Reading from the N-terminus, the 428-residue chain is 3-phosphoshikimate 1-carboxyvinyltransferase (428 aa).

Lys-23, Ser-24, and Arg-28 together coordinate 3-phosphoshikimate. Position 23 (Lys-23) interacts with phosphoenolpyruvate. Gly-97 and Arg-125 together coordinate phosphoenolpyruvate. The 3-phosphoshikimate site is built by Ser-170, Ser-171, Gln-172, Ser-198, Asp-314, Asn-337, and Lys-341. Gln-172 serves as a coordination point for phosphoenolpyruvate. Asp-314 functions as the Proton acceptor in the catalytic mechanism. Residues Arg-345, Arg-387, and Lys-412 each coordinate phosphoenolpyruvate.

This sequence belongs to the EPSP synthase family. Monomer.

It is found in the cytoplasm. The catalysed reaction is 3-phosphoshikimate + phosphoenolpyruvate = 5-O-(1-carboxyvinyl)-3-phosphoshikimate + phosphate. Its pathway is metabolic intermediate biosynthesis; chorismate biosynthesis; chorismate from D-erythrose 4-phosphate and phosphoenolpyruvate: step 6/7. In terms of biological role, catalyzes the transfer of the enolpyruvyl moiety of phosphoenolpyruvate (PEP) to the 5-hydroxyl of shikimate-3-phosphate (S3P) to produce enolpyruvyl shikimate-3-phosphate and inorganic phosphate. This is 3-phosphoshikimate 1-carboxyvinyltransferase from Serratia proteamaculans (strain 568).